The primary structure comprises 261 residues: Putative glyoxylase CFP32 (261 aa).

VOC domains are found at residues 11-129 and 143-257; these read TPNW…LWQA and TLIW…VLKP. Glyoxalase stretches follow at residues 13-123 and 149-252; these read NWVD…TGAA and LLTD…GAIF.

This is Putative glyoxylase CFP32 from Mycobacterium bovis (strain ATCC BAA-935 / AF2122/97).